A 1659-amino-acid polypeptide reads, in one-letter code: Cortactin-binding protein 2 (1659 aa).

The segment at 1-23 is disordered; sequence MATDGASCEPDLSRAPEDAAGAA. Residues 119–276 are a coiled coil; it reads RKMQERMSAQ…EQLKRGSDSK (158 aa). Disordered regions lie at residues 324-436 and 450-474; these read LTMP…LHPG and GNAN…SPTS. 2 stretches are compositionally biased toward low complexity: residues 337 to 348 and 381 to 392; these read ASANAKGSAAMA and GPSTGLTPDPTS. Positions 405 to 418 are enriched in polar residues; that stretch reads TAQTPGITPQNSQA. Arginine 494 bears the Asymmetric dimethylarginine mark. The segment at 495–612 is disordered; the sequence is FTGPQAGAPP…SSPQLPPKPS (118 aa). Polar residues predominate over residues 579–589; that stretch reads TVASPPSSLPQ. ANK repeat units follow at residues 705–735, 739–768, 772–801, 805–834, and 838–867; these read GRPT…DINY, DGHS…QVNA, NGFT…NINH, GGQT…DRNV, and DGWT…PAHG. The segment at 869 to 893 is disordered; the sequence is SFSEEESESGVFDLDGGGESPEGKS. The stretch at 908–938 is one ANK 6 repeat; sequence EGWTAAHIAASKGFKNCLEILCRHGGLETER. Positions 1443-1478 are disordered; the sequence is KKKGESGAWRKVNTSPRRKSGRFSLPTWNKPDLSTE. Residue serine 1520 is modified to Phosphoserine. Residues 1613–1659 are disordered; the sequence is RSKVTQCSQNTKRNSSSSNTRQIEINNNSKEENWNLHKNEHLEKPNK. Low complexity predominate over residues 1620–1634; the sequence is SQNTKRNSSSSNTRQ. Residues 1641-1659 show a composition bias toward basic and acidic residues; sequence SKEENWNLHKNEHLEKPNK.

Interacts with CTTN/cortactin SH3 domain. Interacts with STRN, STRN4/zinedin and MOB4/phocein; this interactions mediate the association with the STRIPAK core complex and may regulate dendritic spine distribution of the STRIPAK complex in hippocampal neurons. Activation of glutamate receptors weakens the interaction with STRN and STRN4.

The protein resides in the cytoplasm. It is found in the cell cortex. It localises to the cell projection. Its subcellular location is the dendritic spine. In terms of biological role, regulates the dendritic spine distribution of CTTN/cortactin in hippocampal neurons, and thus controls dendritic spinogenesis and dendritic spine maintenance. Associates with the striatin-interacting phosphatase and kinase (STRIPAK) core complex to regulate dendritic spine distribution of the STRIPAK complex in hippocampal neurons. This is Cortactin-binding protein 2 (CTTNBP2) from Saimiri boliviensis boliviensis (Bolivian squirrel monkey).